Here is a 264-residue protein sequence, read N- to C-terminus: 3-methyl-2-oxobutanoate hydroxymethyltransferase (264 aa).

2 residues coordinate Mg(2+): D45 and D84. 3-methyl-2-oxobutanoate-binding positions include 45-46, D84, and K112; that span reads DS. E114 is a binding site for Mg(2+). Catalysis depends on E181, which acts as the Proton acceptor.

It belongs to the PanB family. In terms of assembly, homodecamer; pentamer of dimers. Mg(2+) is required as a cofactor.

The protein resides in the cytoplasm. It carries out the reaction 3-methyl-2-oxobutanoate + (6R)-5,10-methylene-5,6,7,8-tetrahydrofolate + H2O = 2-dehydropantoate + (6S)-5,6,7,8-tetrahydrofolate. Its pathway is cofactor biosynthesis; (R)-pantothenate biosynthesis; (R)-pantoate from 3-methyl-2-oxobutanoate: step 1/2. In terms of biological role, catalyzes the reversible reaction in which hydroxymethyl group from 5,10-methylenetetrahydrofolate is transferred onto alpha-ketoisovalerate to form ketopantoate. This is 3-methyl-2-oxobutanoate hydroxymethyltransferase from Erwinia tasmaniensis (strain DSM 17950 / CFBP 7177 / CIP 109463 / NCPPB 4357 / Et1/99).